We begin with the raw amino-acid sequence, 153 residues long: Large ribosomal subunit protein eL15 (153 aa).

K32 participates in a covalent cross-link: Glycyl lysine isopeptide (Lys-Gly) (interchain with G-Cter in SUMO2). Phosphoserine occurs at positions 46 and 49. Positions 114 to 135 are disordered; the sequence is TSAGRKSRGLGKGHKFHHTIGG. The span at 118 to 131 shows a compositional bias: basic residues; that stretch reads RKSRGLGKGHKFHH.

Belongs to the eukaryotic ribosomal protein eL15 family. Component of the large ribosomal subunit. Interacts with IFIT1 (via TPR repeats 1-4).

Its subcellular location is the cytoplasm. Component of the large ribosomal subunit. The ribosome is a large ribonucleoprotein complex responsible for the synthesis of proteins in the cell. The protein is Large ribosomal subunit protein eL15 (RPL15) of Sus scrofa (Pig).